The sequence spans 93 residues: Putative pterin-4-alpha-carbinolamine dehydratase (93 aa).

This sequence belongs to the pterin-4-alpha-carbinolamine dehydratase family.

It catalyses the reaction (4aS,6R)-4a-hydroxy-L-erythro-5,6,7,8-tetrahydrobiopterin = (6R)-L-erythro-6,7-dihydrobiopterin + H2O. This is Putative pterin-4-alpha-carbinolamine dehydratase from Chloroflexus aurantiacus (strain ATCC 29366 / DSM 635 / J-10-fl).